A 116-amino-acid polypeptide reads, in one-letter code: Nucleoid-associated protein P9515_00191 (116 aa).

Residues 89–98 are compositionally biased toward basic and acidic residues; it reads STTTMKERMN. The disordered stretch occupies residues 89-116; sequence STTTMKERMNDLTGGLNLNLPGLDNNDS. Low complexity predominate over residues 99–116; that stretch reads DLTGGLNLNLPGLDNNDS.

This sequence belongs to the YbaB/EbfC family. In terms of assembly, homodimer.

Its subcellular location is the cytoplasm. The protein resides in the nucleoid. In terms of biological role, binds to DNA and alters its conformation. May be involved in regulation of gene expression, nucleoid organization and DNA protection. The protein is Nucleoid-associated protein P9515_00191 of Prochlorococcus marinus (strain MIT 9515).